Reading from the N-terminus, the 280-residue chain is Eukaryotic translation initiation factor 3 subunit F-1 (280 aa).

The region spanning 8-138 (VRVHPVVLFQ…LRAYVCIQLG (131 aa)) is the MPN domain.

Belongs to the eIF-3 subunit F family. In terms of assembly, component of the eukaryotic translation initiation factor 3 (eIF-3) complex. The eIF-3 complex interacts with pix.

It is found in the cytoplasm. Its function is as follows. Component of the eukaryotic translation initiation factor 3 (eIF-3) complex, which is involved in protein synthesis of a specialized repertoire of mRNAs and, together with other initiation factors, stimulates binding of mRNA and methionyl-tRNAi to the 40S ribosome. The eIF-3 complex specifically targets and initiates translation of a subset of mRNAs involved in cell proliferation. This chain is Eukaryotic translation initiation factor 3 subunit F-1, found in Drosophila willistoni (Fruit fly).